Here is a 208-residue protein sequence, read N- to C-terminus: N-(5'-phosphoribosyl)anthranilate isomerase (208 aa).

The protein belongs to the TrpF family.

It carries out the reaction N-(5-phospho-beta-D-ribosyl)anthranilate = 1-(2-carboxyphenylamino)-1-deoxy-D-ribulose 5-phosphate. The protein operates within amino-acid biosynthesis; L-tryptophan biosynthesis; L-tryptophan from chorismate: step 3/5. This chain is N-(5'-phosphoribosyl)anthranilate isomerase, found in Methanococcus maripaludis (strain C7 / ATCC BAA-1331).